The following is a 388-amino-acid chain: MRYLTAGESHGPRLTAIIEGIPAGLPLTAEDINEDLRRRQGGYGRGGRMKIESDQVVFTSGVRHGKTTGAPITMDVINKDHQKWLDIMSAEDIEDRLKSKRKITHPRPGHADLVGGIKYRFDDLRNSLERSSARETTMRVAVGAVAKRLLAELDMEIANHVVVFGGKEIDVPENLTVAEIKQRAAQSEVSIVNQEREQEIKDYIDQIKRDGDTIGGVVETVVGGVPVGXGSYVQWDRKLDARLAQAVVSINAFKGVEFGLGFEAGYRKGSQVMDEILWSKEDGYTRRTNNLGGFEGGMTNGQPIVVRGVMKPIPTLYKPLMSVDIETHEPYKATVERSDPTALPAAGMVMEAVVATVLAQEILEKFSSDNLEELKEAVAKHRDYTKNY.

Residues Arg-39 and Arg-45 each coordinate NADP(+). Residues 130-132 (RSS), 251-252 (NA), Gly-296, 311-315 (KPIPT), and Arg-337 contribute to the FMN site.

Belongs to the chorismate synthase family. As to quaternary structure, homotetramer. FMNH2 is required as a cofactor.

It catalyses the reaction 5-O-(1-carboxyvinyl)-3-phosphoshikimate = chorismate + phosphate. Its pathway is metabolic intermediate biosynthesis; chorismate biosynthesis; chorismate from D-erythrose 4-phosphate and phosphoenolpyruvate: step 7/7. Catalyzes the anti-1,4-elimination of the C-3 phosphate and the C-6 proR hydrogen from 5-enolpyruvylshikimate-3-phosphate (EPSP) to yield chorismate, which is the branch point compound that serves as the starting substrate for the three terminal pathways of aromatic amino acid biosynthesis. This reaction introduces a second double bond into the aromatic ring system. The sequence is that of Chorismate synthase from Streptococcus pneumoniae serotype 19F (strain G54).